Consider the following 361-residue polypeptide: Molybdenum import ATP-binding protein ModC 1 (361 aa).

Residues 1–237 form the ABC transporter domain; sequence MPADGIRARF…LDLPTAFHED (237 aa). An ATP-binding site is contributed by 35 to 42; the sequence is GHSGSGKT. Residues 296–361 enclose the Mop domain; the sequence is DSSITNVLPA…AQIKAVALLG (66 aa).

This sequence belongs to the ABC transporter superfamily. Molybdate importer (TC 3.A.1.8) family. In terms of assembly, the complex is composed of two ATP-binding proteins (ModC), two transmembrane proteins (ModB) and a solute-binding protein (ModA).

The protein resides in the cell inner membrane. The enzyme catalyses molybdate(out) + ATP + H2O = molybdate(in) + ADP + phosphate + H(+). Its function is as follows. Part of the ABC transporter complex ModABC involved in molybdenum import. Responsible for energy coupling to the transport system. The chain is Molybdenum import ATP-binding protein ModC 1 from Azotobacter vinelandii.